The primary structure comprises 457 residues: Reticulophagy regulator 3 (457 aa).

The tract at residues 1–24 is disordered; that stretch reads MAQRVGEEEQGASGLRRRRSGARC. 3 consecutive transmembrane segments (helical) span residues 80-100, 165-185, and 186-206; these read FFALTSLRIIFLVAFGLMIII, PGKFCLLACSFLTFLAVLGGY, and IPGVVLSYLLLLFLLLWPLAI. Residues 291–305 show a composition bias toward polar residues; it reads ENGTFNLSRGQTPLT. 2 disordered regions span residues 291-351 and 410-457; these read ENGT…IPST and AYAE…HSHQ. Residues 310-326 show a composition bias toward basic and acidic residues; that stretch reads DLDRHSDPEESFARDLP. Residues 428-441 are compositionally biased toward acidic residues; that stretch reads LDTDAEADDFELLD. An LIR motif motif is present at residues 435 to 440; it reads DDFELL. The span at 443-457 shows a compositional bias: polar residues; sequence SELSQMDPSSSHSHQ.

Belongs to the RETREG family. As to quaternary structure, interacts with ATG8 family modifier proteins.

Its subcellular location is the endoplasmic reticulum membrane. In terms of biological role, endoplasmic reticulum (ER)-anchored autophagy regulator which exists in an inactive state under basal conditions but is activated following cellular stress. When activated, induces ER fragmentation and mediates ER delivery into lysosomes through sequestration into autophagosomes via interaction with ATG8 family proteins. Promotes ER membrane curvature and ER tubulation required for subsequent ER fragmentation and engulfment into autophagosomes. The sequence is that of Reticulophagy regulator 3 (retreg3) from Xenopus tropicalis (Western clawed frog).